We begin with the raw amino-acid sequence, 419 residues long: Serine--tRNA ligase (419 aa).

The interval 45-66 is disordered; the sequence is ADSLRAEQKAASKSVGGASPEE. An L-serine-binding site is contributed by 226-228; it reads TSE. ATP-binding positions include 257–259 and V273; that span reads RRE. E280 contacts L-serine. 344-347 is an ATP binding site; that stretch reads ELTS. T379 lines the L-serine pocket.

It belongs to the class-II aminoacyl-tRNA synthetase family. Type-1 seryl-tRNA synthetase subfamily. In terms of assembly, homodimer. The tRNA molecule binds across the dimer.

It localises to the cytoplasm. It catalyses the reaction tRNA(Ser) + L-serine + ATP = L-seryl-tRNA(Ser) + AMP + diphosphate + H(+). The catalysed reaction is tRNA(Sec) + L-serine + ATP = L-seryl-tRNA(Sec) + AMP + diphosphate + H(+). The protein operates within aminoacyl-tRNA biosynthesis; selenocysteinyl-tRNA(Sec) biosynthesis; L-seryl-tRNA(Sec) from L-serine and tRNA(Sec): step 1/1. Its function is as follows. Catalyzes the attachment of serine to tRNA(Ser). Is also able to aminoacylate tRNA(Sec) with serine, to form the misacylated tRNA L-seryl-tRNA(Sec), which will be further converted into selenocysteinyl-tRNA(Sec). This Mycobacterium ulcerans (strain Agy99) protein is Serine--tRNA ligase.